Consider the following 1195-residue polypeptide: Chromosome partition protein Smc (1195 aa).

33–40 serves as a coordination point for ATP; it reads PNGSGKSN. Coiled-coil stretches lie at residues 185 to 241, 273 to 348, and 380 to 528; these read GVAQ…RQEQ, DAAT…IQAL, and QYQQ…QETQ. Residues 542 to 658 form the SMC hinge domain; that stretch reads PGVHGLVAQL…FERLDQARRY (117 aa). Positions 698-1043 form a coiled coil; the sequence is GESAEVRAIR…ELLLRIENFT (346 aa).

It belongs to the SMC family. Homodimer.

It localises to the cytoplasm. Required for chromosome condensation and partitioning. The protein is Chromosome partition protein Smc of Synechococcus sp. (strain ATCC 27144 / PCC 6301 / SAUG 1402/1) (Anacystis nidulans).